Here is a 426-residue protein sequence, read N- to C-terminus: Glutamate-1-semialdehyde 2,1-aminomutase (426 aa).

Residue lysine 265 is modified to N6-(pyridoxal phosphate)lysine.

Belongs to the class-III pyridoxal-phosphate-dependent aminotransferase family. HemL subfamily. As to quaternary structure, homodimer. It depends on pyridoxal 5'-phosphate as a cofactor.

The protein resides in the cytoplasm. It catalyses the reaction (S)-4-amino-5-oxopentanoate = 5-aminolevulinate. It functions in the pathway porphyrin-containing compound metabolism; protoporphyrin-IX biosynthesis; 5-aminolevulinate from L-glutamyl-tRNA(Glu): step 2/2. The polypeptide is Glutamate-1-semialdehyde 2,1-aminomutase (Escherichia coli O7:K1 (strain IAI39 / ExPEC)).